A 142-amino-acid chain; its full sequence is Hemoglobin subunit alpha (142 aa).

One can recognise a Globin domain in the interval 2 to 142; it reads VLSSADKNNV…VSTVLTSKYR (141 aa). Serine 4 carries the phosphoserine modification. 2 positions are modified to N6-succinyllysine: lysine 8 and lysine 12. Position 17 is an N6-acetyllysine; alternate (lysine 17). Lysine 17 carries the post-translational modification N6-succinyllysine; alternate. Phosphotyrosine is present on tyrosine 25. Serine 36 carries the post-translational modification Phosphoserine. Lysine 41 carries the post-translational modification N6-succinyllysine. Residue serine 50 is modified to Phosphoserine. Histidine 59 is a binding site for O2. Histidine 88 serves as a coordination point for heme b. Phosphoserine is present on serine 103. Position 109 is a phosphothreonine (threonine 109). Serine 125 is modified (phosphoserine). 2 positions are modified to phosphothreonine: threonine 135 and threonine 138. Serine 139 carries the post-translational modification Phosphoserine.

Belongs to the globin family. Heterotetramer of two alpha chains and two beta chains. Red blood cells.

Involved in oxygen transport from the lung to the various peripheral tissues. Functionally, hemopressin acts as an antagonist peptide of the cannabinoid receptor CNR1. Hemopressin-binding efficiently blocks cannabinoid receptor CNR1 and subsequent signaling. This chain is Hemoglobin subunit alpha (HBA), found in Panthera leo (Lion).